The sequence spans 230 residues: Ribosomal RNA small subunit methyltransferase G (230 aa).

Residues Gly80, Phe85, Val131–Glu132, and Arg145 each bind S-adenosyl-L-methionine.

Belongs to the methyltransferase superfamily. RNA methyltransferase RsmG family.

Its subcellular location is the cytoplasm. It carries out the reaction guanosine(527) in 16S rRNA + S-adenosyl-L-methionine = N(7)-methylguanosine(527) in 16S rRNA + S-adenosyl-L-homocysteine. Functionally, specifically methylates the N7 position of guanine in position 527 of 16S rRNA. The protein is Ribosomal RNA small subunit methyltransferase G of Novosphingobium aromaticivorans (strain ATCC 700278 / DSM 12444 / CCUG 56034 / CIP 105152 / NBRC 16084 / F199).